A 202-amino-acid chain; its full sequence is Energy-coupling factor transporter transmembrane protein BioN (202 aa).

The next 3 membrane-spanning stretches (helical) occupy residues 21–40, 44–63, and 68–90; these read LLSLTAFAILLFISHNLLLL, VLVAAVLYGTVGLPIGEALL, and IFLTIAVVALFNLIFNPWQAALV.

This sequence belongs to the CbiQ family. As to quaternary structure, part of a biotin transporter complex composed of BioM, BioN and BioY.

It is found in the cell inner membrane. Involved in biotin uptake. The sequence is that of Energy-coupling factor transporter transmembrane protein BioN (bioN) from Rhizobium etli (strain ATCC 51251 / DSM 11541 / JCM 21823 / NBRC 15573 / CFN 42).